The chain runs to 71 residues: Non-disulfide-bridged peptide 5.5 (71 aa).

The N-terminal stretch at 1 to 23 is a signal peptide; it reads MKTQFIVLIVAIVFLQLLSQSEA. Leu-36 is modified (leucine amide). Positions 40 to 71 are excised as a propeptide; the sequence is DLRHLDLDQFDDMFDQPEISAADMKFLQDLLR.

It belongs to the non-disulfide-bridged peptide (NDBP) superfamily. Short antimicrobial peptide (group 4) family. Expressed by the venom gland.

The protein resides in the secreted. It localises to the target cell membrane. Functionally, antimicrobial peptide. Is active on Mycobacterium abscessus subsp. massiliense (MBC=200 uM), a rapidly growing and emerging pathogen associated with healthcare infections. Also shows antifungal activities. Has a weak hemolytic activity on human erythrocytes (10% at 610 uM), indicating a low toxicity (therapeutic index (TI)=3.05). In addition, treatment of infected macrophages reduces the bacterial load. In vivo, treatment of M.abscessus-infected mice causes a decrease in the bacterial load in the lungs and liver. The protein is Non-disulfide-bridged peptide 5.5 of Hoffmannihadrurus gertschi (Scorpion).